The sequence spans 218 residues: Ribonuclease S-7 (218 aa).

The first 22 residues, 1-22, serve as a signal peptide directing secretion; sequence MLNSPLTSVLFVLLFVLSPIYG. Position 32 (Q32) interacts with RNA. C38 and C43 form a disulfide bridge. Residue N49 is glycosylated (N-linked (GlcNAc...) asparagine). An RNA-binding site is contributed by H53. Catalysis depends on H53, which acts as the Proton donor. An N-linked (GlcNAc...) asparagine glycan is attached at N59. A disulfide bridge links C67 with C116. Residues 91-92, F105, 108-109, and 112-113 each bind RNA; these read DL, HE, and KH. E109 is a catalytic residue. H113 serves as the catalytic Proton acceptor. A glycan (N-linked (GlcNAc...) asparagine) is linked at N162. Disulfide bonds link C177–C207 and C190–C201.

The protein belongs to the RNase T2 family.

It is found in the secreted. Its subcellular location is the extracellular space. The catalysed reaction is a ribonucleotidyl-ribonucleotide-RNA + H2O = a 3'-end 3'-phospho-ribonucleotide-RNA + a 5'-end dephospho-ribonucleoside-RNA + H(+). Self-incompatibility (SI) is the inherited ability of a flowering plant to prevent self-fertilization by discriminating between self and non-self pollen during pollination. In many species of the Solanaceae, self-incompatibility is controlled by the single, multiallelic locus S. This stylar glycoprotein is associated with expression of self-incompatibility in potato. The protein is Ribonuclease S-7 of Nicotiana alata (Winged tobacco).